We begin with the raw amino-acid sequence, 380 residues long: Lipid-A-disaccharide synthase (380 aa).

This sequence belongs to the LpxB family.

The enzyme catalyses a lipid X + a UDP-2-N,3-O-bis[(3R)-3-hydroxyacyl]-alpha-D-glucosamine = a lipid A disaccharide + UDP + H(+). Its pathway is bacterial outer membrane biogenesis; LPS lipid A biosynthesis. Functionally, condensation of UDP-2,3-diacylglucosamine and 2,3-diacylglucosamine-1-phosphate to form lipid A disaccharide, a precursor of lipid A, a phosphorylated glycolipid that anchors the lipopolysaccharide to the outer membrane of the cell. This Photobacterium profundum (strain SS9) protein is Lipid-A-disaccharide synthase.